We begin with the raw amino-acid sequence, 132 residues long: Small ribosomal subunit protein uS8 (132 aa).

It belongs to the universal ribosomal protein uS8 family. As to quaternary structure, part of the 30S ribosomal subunit. Contacts proteins S5 and S12.

One of the primary rRNA binding proteins, it binds directly to 16S rRNA central domain where it helps coordinate assembly of the platform of the 30S subunit. In Mycolicibacterium smegmatis (strain ATCC 700084 / mc(2)155) (Mycobacterium smegmatis), this protein is Small ribosomal subunit protein uS8.